A 271-amino-acid polypeptide reads, in one-letter code: Orotidine 5'-phosphate decarboxylase (271 aa).

Residue lysine 95 is the Proton donor of the active site.

Belongs to the OMP decarboxylase family. Type 2 subfamily.

The catalysed reaction is orotidine 5'-phosphate + H(+) = UMP + CO2. It participates in pyrimidine metabolism; UMP biosynthesis via de novo pathway; UMP from orotate: step 2/2. The sequence is that of Orotidine 5'-phosphate decarboxylase from Ralstonia pickettii (strain 12J).